A 268-amino-acid chain; its full sequence is Phosphatidylglycerol--prolipoprotein diacylglyceryl transferase (268 aa).

3 helical membrane passes run 25 to 45 (WYGV…TKVF), 57 to 77 (YLFY…HCFF), and 93 to 113 (VWHG…AVYF). Residue Arg142 participates in a 1,2-diacyl-sn-glycero-3-phospho-(1'-sn-glycerol) binding. 4 helical membrane-spanning segments follow: residues 151–171 (IIGI…DLLP), 175–195 (VQLY…LAYW), 204–224 (GLLL…LEFF), and 236–256 (PLSV…LLIF).

The protein belongs to the Lgt family.

Its subcellular location is the cell inner membrane. The enzyme catalyses L-cysteinyl-[prolipoprotein] + a 1,2-diacyl-sn-glycero-3-phospho-(1'-sn-glycerol) = an S-1,2-diacyl-sn-glyceryl-L-cysteinyl-[prolipoprotein] + sn-glycerol 1-phosphate + H(+). It participates in protein modification; lipoprotein biosynthesis (diacylglyceryl transfer). Its function is as follows. Catalyzes the transfer of the diacylglyceryl group from phosphatidylglycerol to the sulfhydryl group of the N-terminal cysteine of a prolipoprotein, the first step in the formation of mature lipoproteins. This is Phosphatidylglycerol--prolipoprotein diacylglyceryl transferase from Chloroherpeton thalassium (strain ATCC 35110 / GB-78).